A 275-amino-acid polypeptide reads, in one-letter code: Formamidopyrimidine-DNA glycosylase (275 aa).

P2 serves as the catalytic Schiff-base intermediate with DNA. The active-site Proton donor is E3. K58 acts as the Proton donor; for beta-elimination activity in catalysis. H91, R109, and R154 together coordinate DNA. The segment at A240–K274 adopts an FPG-type zinc-finger fold. The active-site Proton donor; for delta-elimination activity is the R264.

Belongs to the FPG family. As to quaternary structure, monomer. Zn(2+) serves as cofactor.

The catalysed reaction is Hydrolysis of DNA containing ring-opened 7-methylguanine residues, releasing 2,6-diamino-4-hydroxy-5-(N-methyl)formamidopyrimidine.. The enzyme catalyses 2'-deoxyribonucleotide-(2'-deoxyribose 5'-phosphate)-2'-deoxyribonucleotide-DNA = a 3'-end 2'-deoxyribonucleotide-(2,3-dehydro-2,3-deoxyribose 5'-phosphate)-DNA + a 5'-end 5'-phospho-2'-deoxyribonucleoside-DNA + H(+). Its function is as follows. Involved in base excision repair of DNA damaged by oxidation or by mutagenic agents. Acts as a DNA glycosylase that recognizes and removes damaged bases. Has a preference for oxidized purines, such as 7,8-dihydro-8-oxoguanine (8-oxoG). Has AP (apurinic/apyrimidinic) lyase activity and introduces nicks in the DNA strand. Cleaves the DNA backbone by beta-delta elimination to generate a single-strand break at the site of the removed base with both 3'- and 5'-phosphates. The sequence is that of Formamidopyrimidine-DNA glycosylase from Bordetella pertussis (strain Tohama I / ATCC BAA-589 / NCTC 13251).